Here is a 261-residue protein sequence, read N- to C-terminus: Global transcriptional regulator CodY (261 aa).

A GAF domain region spans residues 1-159 (MANLLDKTRK…ASTVVGLQLL (159 aa)). The segment at residues 207–226 (ASVIADRIGITRSVIVNALR) is a DNA-binding region (H-T-H motif).

This sequence belongs to the CodY family.

It is found in the cytoplasm. DNA-binding global transcriptional regulator which is involved in the adaptive response to starvation and acts by directly or indirectly controlling the expression of numerous genes in response to nutrient availability. During rapid exponential growth, CodY is highly active and represses genes whose products allow adaptation to nutrient depletion. This Streptococcus thermophilus (strain CNRZ 1066) protein is Global transcriptional regulator CodY.